A 276-amino-acid chain; its full sequence is Nuclear egress protein 2 (276 aa).

The Perinuclear space portion of the chain corresponds to 1-253; it reads MAGMGKPYGG…LFRAPRPGPP (253 aa). The segment covering 212-225 has biased composition (low complexity); the sequence is HSSGAPGPGVAASG. Residues 212-237 are disordered; that stretch reads HSSGAPGPGVAASGPPAPPGRGPARP. Residues 254 to 274 form a helical membrane-spanning segment; sequence ALLLLAAGLFLGAAIWWAVGA. Residues 275–276 lie on the Nuclear side of the membrane; the sequence is RL.

Belongs to the herpesviridae NEC2 protein family. Forms a heterohexameric complex with NEC1. In terms of processing, phosphorylated.

Its subcellular location is the host nucleus inner membrane. Its function is as follows. Plays an essential role in virion nuclear egress, the first step of virion release from infected cell. Within the host nucleus, NEC1 interacts with the newly formed capsid through the vertexes and directs it to the inner nuclear membrane by associating with NEC2. Induces the budding of the capsid at the inner nuclear membrane as well as its envelopment into the perinuclear space. There, the NEC1/NEC2 complex promotes the fusion of the enveloped capsid with the outer nuclear membrane and the subsequent release of the viral capsid into the cytoplasm where it will reach the secondary budding sites in the host Golgi or trans-Golgi network. The sequence is that of Nuclear egress protein 2 from Homo sapiens (Human).